The sequence spans 1017 residues: Probable beta-galactosidase B (1017 aa).

The first 20 residues, 1-20, serve as a signal peptide directing secretion; sequence MTRITKLCVLLLSSIGLLAA. N-linked (GlcNAc...) asparagine glycosylation is present at Asn23. Tyr90 contributes to the substrate binding site. Asn100 carries N-linked (GlcNAc...) asparagine glycosylation. Residues Asn135, Ala136, and Glu137 each contribute to the substrate site. N-linked (GlcNAc...) asparagine glycosylation is present at Asn158. Residue Asn195 participates in substrate binding. Residue Glu196 is the Proton donor of the active site. N-linked (GlcNAc...) asparagine glycosylation occurs at Asn211. Tyr265 provides a ligand contact to substrate. An intrachain disulfide couples Cys271 to Cys324. Residue Glu308 is the Nucleophile of the active site. Position 373 (Tyr373) interacts with substrate. Residues Asn411, Asn417, Asn456, Asn628, Asn681, Asn737, Asn770, Asn777, Asn785, Asn828, and Asn829 are each glycosylated (N-linked (GlcNAc...) asparagine).

The protein belongs to the glycosyl hydrolase 35 family.

The protein resides in the secreted. The enzyme catalyses Hydrolysis of terminal non-reducing beta-D-galactose residues in beta-D-galactosides.. Its function is as follows. Cleaves beta-linked terminal galactosyl residues from gangliosides, glycoproteins, and glycosaminoglycans. The sequence is that of Probable beta-galactosidase B (lacB) from Aspergillus niger (strain ATCC MYA-4892 / CBS 513.88 / FGSC A1513).